A 461-amino-acid polypeptide reads, in one-letter code: tRNA(Ile)-lysidine synthase (461 aa).

Residue 26 to 31 participates in ATP binding; the sequence is SGGPDS.

Belongs to the tRNA(Ile)-lysidine synthase family.

Its subcellular location is the cytoplasm. It carries out the reaction cytidine(34) in tRNA(Ile2) + L-lysine + ATP = lysidine(34) in tRNA(Ile2) + AMP + diphosphate + H(+). Its function is as follows. Ligates lysine onto the cytidine present at position 34 of the AUA codon-specific tRNA(Ile) that contains the anticodon CAU, in an ATP-dependent manner. Cytidine is converted to lysidine, thus changing the amino acid specificity of the tRNA from methionine to isoleucine. This chain is tRNA(Ile)-lysidine synthase, found in Clostridium acetobutylicum (strain ATCC 824 / DSM 792 / JCM 1419 / IAM 19013 / LMG 5710 / NBRC 13948 / NRRL B-527 / VKM B-1787 / 2291 / W).